Here is a 95-residue protein sequence, read N- to C-terminus: Co-chaperonin GroES (95 aa).

It belongs to the GroES chaperonin family. In terms of assembly, heptamer of 7 subunits arranged in a ring. Interacts with the chaperonin GroEL.

The protein resides in the cytoplasm. Together with the chaperonin GroEL, plays an essential role in assisting protein folding. The GroEL-GroES system forms a nano-cage that allows encapsulation of the non-native substrate proteins and provides a physical environment optimized to promote and accelerate protein folding. GroES binds to the apical surface of the GroEL ring, thereby capping the opening of the GroEL channel. The protein is Co-chaperonin GroES of Streptococcus mutans serotype c (strain ATCC 700610 / UA159).